The following is a 342-amino-acid chain: Protein-ribulosamine 3-kinase, chloroplastic (342 aa).

A chloroplast-targeting transit peptide spans 1–46 (MANVALLSAASPSTSSAAPRLRHVARRRPSRRSACPRSAASRLSIM). ATP is bound at residue 141–143 (EFI). Asp-246 functions as the Proton acceptor in the catalytic mechanism.

The protein belongs to the fructosamine kinase family.

The protein resides in the plastid. It localises to the chloroplast. It carries out the reaction N(6)-D-ribulosyl-L-lysyl-[protein] + ATP = N(6)-(3-O-phospho-D-ribulosyl)-L-lysyl-[protein] + ADP + H(+). The catalysed reaction is N(6)-(D-erythrulosyl)-L-lysyl-[protein] + ATP = N(6)-(3-O-phospho-D-erythrulosyl)-L-lysyl-[protein] + ADP + H(+). Initiates a process leading to the deglycation of proteins. Phosphorylates low-molecular-mass and protein-bound erythrulosamines and ribulosamines, but not fructosamines or psicosamines, on the third carbon of the sugar moiety. Protein-bound erythrulosamine 3-phosphates and ribulosamine 3-phosphates are unstable and decompose under physiological conditions. The polypeptide is Protein-ribulosamine 3-kinase, chloroplastic (Oryza sativa subsp. indica (Rice)).